The following is a 493-amino-acid chain: GTPase Der (493 aa).

One can recognise an EngA-type G 1 domain in the interval 3 to 166 (PVIALVGRPN…EALGIFPKDN (164 aa)). GTP-binding positions include 9-16 (GRPNVGKS), 56-60 (DTGGI), and 118-121 (NKVD). The tract at residues 166–195 (NAEEEGEGEPASEEVAEGEEPTRIPGPSEK) is disordered. Positions 167-184 (AEEEGEGEPASEEVAEGE) are enriched in acidic residues. One can recognise an EngA-type G 2 domain in the interval 198–371 (IKIAIIGRPN…SVQESFRSAV (174 aa)). Residues 204-211 (GRPNVGKS), 251-255 (DTAGV), and 316-319 (NKWD) contribute to the GTP site. A KH-like domain is found at 372 to 456 (TRWPTSRLTS…PIRIEYKGGE (85 aa)). A compositionally biased stretch (basic and acidic residues) spans 454 to 463 (GGENPYEGKK). The segment at 454-493 (GGENPYEGKKNSLTARQVNKKRRLMSHHKKAEKKKKDKRR) is disordered. Over residues 471–493 (VNKKRRLMSHHKKAEKKKKDKRR) the composition is skewed to basic residues.

The protein belongs to the TRAFAC class TrmE-Era-EngA-EngB-Septin-like GTPase superfamily. EngA (Der) GTPase family. Associates with the 50S ribosomal subunit.

GTPase that plays an essential role in the late steps of ribosome biogenesis. The protein is GTPase Der of Pseudomonas aeruginosa (strain UCBPP-PA14).